A 427-amino-acid chain; its full sequence is Adenylosuccinate synthetase (427 aa).

Residues 12-18 (GDEGKGK) and 40-42 (GHT) contribute to the GTP site. Residue aspartate 13 is the Proton acceptor of the active site. 2 residues coordinate Mg(2+): aspartate 13 and glycine 40. Residues 13 to 16 (DEGK), 38 to 41 (NAGH), threonine 128, arginine 142, glutamine 223, threonine 238, and arginine 302 contribute to the IMP site. Histidine 41 serves as the catalytic Proton donor. 298–304 (TTTGRAR) provides a ligand contact to substrate. Residues arginine 304, 330 to 332 (KLD), and 412 to 414 (AVG) each bind GTP.

This sequence belongs to the adenylosuccinate synthetase family. As to quaternary structure, homodimer. The cofactor is Mg(2+).

It localises to the cytoplasm. It carries out the reaction IMP + L-aspartate + GTP = N(6)-(1,2-dicarboxyethyl)-AMP + GDP + phosphate + 2 H(+). It participates in purine metabolism; AMP biosynthesis via de novo pathway; AMP from IMP: step 1/2. Functionally, plays an important role in the de novo pathway of purine nucleotide biosynthesis. Catalyzes the first committed step in the biosynthesis of AMP from IMP. The protein is Adenylosuccinate synthetase of Desulfitobacterium hafniense (strain Y51).